A 361-amino-acid chain; its full sequence is Probable mannitol dehydrogenase (361 aa).

Cys51, His73, Cys104, Cys107, Cys110, Cys118, and Cys167 together coordinate Zn(2+).

Belongs to the zinc-containing alcohol dehydrogenase family. Zn(2+) is required as a cofactor.

It catalyses the reaction D-mannitol + NAD(+) = D-mannose + NADH + H(+). Its function is as follows. Oxidizes mannitol to mannose. Provides the initial step by which translocated mannitol is committed to central metabolism and, by regulating mannitol pool size, is important in regulating salt tolerance at the cellular level. The polypeptide is Probable mannitol dehydrogenase (ELI3) (Mesembryanthemum crystallinum (Common ice plant)).